A 349-amino-acid chain; its full sequence is Lipoyl synthase (349 aa).

The [4Fe-4S] cluster site is built by cysteine 55, cysteine 60, cysteine 66, cysteine 81, cysteine 85, cysteine 88, and serine 292. The Radical SAM core domain maps to 67 to 281; that stretch reads WESREATFLI…ADFARELGFG (215 aa).

It belongs to the radical SAM superfamily. Lipoyl synthase family. It depends on [4Fe-4S] cluster as a cofactor.

It localises to the cytoplasm. It carries out the reaction [[Fe-S] cluster scaffold protein carrying a second [4Fe-4S](2+) cluster] + N(6)-octanoyl-L-lysyl-[protein] + 2 oxidized [2Fe-2S]-[ferredoxin] + 2 S-adenosyl-L-methionine + 4 H(+) = [[Fe-S] cluster scaffold protein] + N(6)-[(R)-dihydrolipoyl]-L-lysyl-[protein] + 4 Fe(3+) + 2 hydrogen sulfide + 2 5'-deoxyadenosine + 2 L-methionine + 2 reduced [2Fe-2S]-[ferredoxin]. The protein operates within protein modification; protein lipoylation via endogenous pathway; protein N(6)-(lipoyl)lysine from octanoyl-[acyl-carrier-protein]: step 2/2. Functionally, catalyzes the radical-mediated insertion of two sulfur atoms into the C-6 and C-8 positions of the octanoyl moiety bound to the lipoyl domains of lipoate-dependent enzymes, thereby converting the octanoylated domains into lipoylated derivatives. This is Lipoyl synthase from Corynebacterium diphtheriae (strain ATCC 700971 / NCTC 13129 / Biotype gravis).